The chain runs to 190 residues: Large ribosomal subunit protein uL5 (190 aa).

Belongs to the universal ribosomal protein uL5 family. Part of the 50S ribosomal subunit; contacts the 5S rRNA and probably tRNA. Forms a bridge to the 30S subunit in the 70S ribosome.

Functionally, this is one of the proteins that bind and probably mediate the attachment of the 5S RNA into the large ribosomal subunit, where it forms part of the central protuberance. In the 70S ribosome it contacts protein S13 of the 30S subunit (bridge B1b), connecting the 2 subunits; this bridge is implicated in subunit movement. May contact the P site tRNA; the 5S rRNA and some of its associated proteins might help stabilize positioning of ribosome-bound tRNAs. This chain is Large ribosomal subunit protein uL5, found in Methanocaldococcus jannaschii (strain ATCC 43067 / DSM 2661 / JAL-1 / JCM 10045 / NBRC 100440) (Methanococcus jannaschii).